We begin with the raw amino-acid sequence, 315 residues long: Outer membrane protease IcsP (315 aa).

An N-terminal signal peptide occupies residues 1–20 (MKLKFFVLALCVPAIFTTHA). Active-site residues include Asp-103, Asp-105, Asp-230, and His-232.

It belongs to the peptidase A26 family.

It localises to the cell outer membrane. Protease responsible for the cleavage of IcsA between 'Arg-758' and 'Arg-759', removing the entire alpha domain from IscA localized on the bacterial surface. This proteolytic activity contributes to the maintenance of a tight polar cap of IcsA, which is important to Shigella actin-based motility. In Shigella flexneri, this protein is Outer membrane protease IcsP (icsP).